The primary structure comprises 199 residues: Putative 3-methyladenine DNA glycosylase (199 aa).

The protein belongs to the DNA glycosylase MPG family.

The polypeptide is Putative 3-methyladenine DNA glycosylase (Rhizobium etli (strain ATCC 51251 / DSM 11541 / JCM 21823 / NBRC 15573 / CFN 42)).